A 584-amino-acid polypeptide reads, in one-letter code: Long-chain-fatty-acid--AMP ligase FadD26 (584 aa).

Belongs to the ATP-dependent AMP-binding enzyme family.

The catalysed reaction is holo-[(phenol)carboxyphthiodiolenone synthase] + a long-chain fatty acid + ATP = a long-chain fatty acyl-[(phenol)carboxyphthiodiolenone synthase] + AMP + diphosphate. It carries out the reaction eicosanoate + holo-[(phenol)carboxyphthiodiolenone synthase] + ATP = icosanoyl-[(phenol)carboxyphthiodiolenone synthase] + AMP + diphosphate. It catalyses the reaction holo-[(phenol)carboxyphthiodiolenone synthase] + docosanoate + ATP = docosanoyl-[(phenol)carboxyphthiodiolenone synthase] + AMP + diphosphate. It participates in lipid metabolism; fatty acid biosynthesis. Functionally, catalyzes the activation of long-chain fatty acids as acyl-adenylates (acyl-AMP), which are then transferred to the multifunctional polyketide synthase PpsA for further chain extension. Catalyzes the adenylation of the long-chain fatty acids eicosanoate (C20) or docosanoate (C22), and potentially the very-long-chain fatty acid lignocerate (C24). Involved in the biosynthesis of phthiocerol dimycocerosate (DIM A) and phthiodiolone dimycocerosate (DIM B). In Mycobacterium marinum (strain ATCC BAA-535 / M), this protein is Long-chain-fatty-acid--AMP ligase FadD26.